Reading from the N-terminus, the 447-residue chain is Na(+)-translocating NADH-quinone reductase subunit A (447 aa).

It belongs to the NqrA family. Composed of six subunits; NqrA, NqrB, NqrC, NqrD, NqrE and NqrF.

The catalysed reaction is a ubiquinone + n Na(+)(in) + NADH + H(+) = a ubiquinol + n Na(+)(out) + NAD(+). In terms of biological role, NQR complex catalyzes the reduction of ubiquinone-1 to ubiquinol by two successive reactions, coupled with the transport of Na(+) ions from the cytoplasm to the periplasm. NqrA to NqrE are probably involved in the second step, the conversion of ubisemiquinone to ubiquinol. The chain is Na(+)-translocating NADH-quinone reductase subunit A from Haemophilus influenzae (strain PittGG).